A 392-amino-acid polypeptide reads, in one-letter code: Galactokinase (392 aa).

33–36 contributes to the substrate binding site; it reads EHTD. ATP contacts are provided by residues Ser-67 and 129 to 135; that span reads GSGLSSS. Residues Ser-135 and Glu-167 each contribute to the Mg(2+) site. The active-site Proton acceptor is the Asp-179. Tyr-229 contacts substrate.

The protein belongs to the GHMP kinase family. GalK subfamily.

The protein localises to the cytoplasm. The enzyme catalyses alpha-D-galactose + ATP = alpha-D-galactose 1-phosphate + ADP + H(+). It functions in the pathway carbohydrate metabolism; galactose metabolism. In terms of biological role, catalyzes the transfer of the gamma-phosphate of ATP to D-galactose to form alpha-D-galactose-1-phosphate (Gal-1-P). This is Galactokinase from Limosilactobacillus reuteri (strain DSM 20016) (Lactobacillus reuteri).